We begin with the raw amino-acid sequence, 674 residues long: DNA ligase (674 aa).

NAD(+) contacts are provided by residues 36–40, 85–86, and E116; these read DSVYD and SL. K118 functions as the N6-AMP-lysine intermediate in the catalytic mechanism. NAD(+)-binding residues include R139, E176, K292, and K316. Zn(2+)-binding residues include C410, C413, C428, and C433. Residues 596 to 674 form the BRCT domain; the sequence is PSSGNIAGKT…EADLLKFLTN (79 aa).

It belongs to the NAD-dependent DNA ligase family. LigA subfamily. Mg(2+) serves as cofactor. Mn(2+) is required as a cofactor.

The catalysed reaction is NAD(+) + (deoxyribonucleotide)n-3'-hydroxyl + 5'-phospho-(deoxyribonucleotide)m = (deoxyribonucleotide)n+m + AMP + beta-nicotinamide D-nucleotide.. Its function is as follows. DNA ligase that catalyzes the formation of phosphodiester linkages between 5'-phosphoryl and 3'-hydroxyl groups in double-stranded DNA using NAD as a coenzyme and as the energy source for the reaction. It is essential for DNA replication and repair of damaged DNA. This is DNA ligase from Rippkaea orientalis (strain PCC 8801 / RF-1) (Cyanothece sp. (strain PCC 8801)).